Here is a 311-residue protein sequence, read N- to C-terminus: Solute carrier family 25 member 36 (311 aa).

Solcar repeat units lie at residues 4 to 108 (RDTL…CKEK), 116 to 203 (DSTQ…IKQK), and 224 to 308 (SDFV…VVYL). The next 6 membrane-spanning stretches (helical) occupy residues 7 to 27 (LVHL…TCPL), 41 to 57 (LYIS…ASVN), 111 to 131 (GVFD…AGFT), 180 to 200 (MSAS…YESI), 226 to 246 (FVRM…IAYP), and 291 to 311 (QIPN…LLNG).

The protein belongs to the mitochondrial carrier (TC 2.A.29) family.

It localises to the mitochondrion inner membrane. The catalysed reaction is UTP(in) + CTP(out) = UTP(out) + CTP(in). It carries out the reaction CTP(out) + UDP(in) = CTP(in) + UDP(out). The enzyme catalyses UMP(in) + CTP(out) = UMP(out) + CTP(in). It catalyses the reaction dUTP(in) + CTP(out) = dUTP(out) + CTP(in). The catalysed reaction is dUMP(in) + CTP(out) = dUMP(out) + CTP(in). It carries out the reaction CDP(in) + CTP(out) = CDP(out) + CTP(in). The enzyme catalyses CTP(out) + CMP(in) = CTP(in) + CMP(out). It catalyses the reaction dCTP(in) + CTP(out) = dCTP(out) + CTP(in). The catalysed reaction is dCDP(in) + CTP(out) = dCDP(out) + CTP(in). It carries out the reaction dCMP(in) + CTP(out) = dCMP(out) + CTP(in). The enzyme catalyses GTP(in) + CTP(out) = GTP(out) + CTP(in). It catalyses the reaction CTP(out) + GDP(in) = CTP(in) + GDP(out). The catalysed reaction is GMP(in) + CTP(out) = GMP(out) + CTP(in). It carries out the reaction dGTP(in) + CTP(out) = dGTP(out) + CTP(in). The enzyme catalyses dGMP(in) + CTP(out) = dGMP(out) + CTP(in). It catalyses the reaction ITP(in) + CTP(out) = ITP(out) + CTP(in). The catalysed reaction is IDP(in) + CTP(out) = IDP(out) + CTP(in). It carries out the reaction IMP(in) + CTP(out) = IMP(out) + CTP(in). The enzyme catalyses CTP(out) = CTP(in). In terms of biological role, mitochondrial transporter that imports/exports pyrimidine nucleotides into and from mitochondria. Selectively transports cytosine, guanosine, inosine and uridine (deoxy)nucleoside mono-, di-, and triphosphates by antiport mechanism. Catalyzes uniport at much lower rate. May import (deoxy)nucleoside triphosphates in exchange for intramitochondrial (deoxy)nucleoside mono- and diphosphates, thus providing precursors necessary for de novo synthesis of mitochondrial DNA and RNA while exporting products of their catabolism. Participates in mitochondrial genome maintenance, regulation of mitochondrial membrane potential and mitochondrial respiration. The polypeptide is Solute carrier family 25 member 36 (Slc25a36) (Mus musculus (Mouse)).